A 365-amino-acid polypeptide reads, in one-letter code: DNA replication and repair protein RecF (365 aa).

30–37 (GQNGSGKT) serves as a coordination point for ATP.

It belongs to the RecF family.

It localises to the cytoplasm. In terms of biological role, the RecF protein is involved in DNA metabolism; it is required for DNA replication and normal SOS inducibility. RecF binds preferentially to single-stranded, linear DNA. It also seems to bind ATP. This is DNA replication and repair protein RecF from Shewanella woodyi (strain ATCC 51908 / MS32).